The chain runs to 300 residues: MNYNLSKYPDDVSRLFKPRPPLSYKRPTDYPYAKRQTNPNITGVANLLSTSLKHYMEEFPEGSPNNHLQRYEDIKLSKIKNAQLLDRRLQNWNPNVDPHIKDTDPYRTIFIGRLPYDLDEIELQKYFVKFGEIEKIRIVKDKITQKSKGYAFIVFKDPISSKMAFKEIGVHRGIQIKDRICIVDIERGRTVKYFKPRRLGGGLGGRGYSNRDSRLPGRFASASTSNPAERNYAPRLPRRETSSSAYSADRYGSSTLDARYRGNRPLLSAATPTAAVTSVYKSRNSRTRESQPAPKEAPDY.

The region spanning 107 to 198 (RTIFIGRLPY…RTVKYFKPRR (92 aa)) is the RRM domain. Disordered regions lie at residues 204-248 (GGRG…AYSA) and 263-300 (NRPL…APDY). Over residues 265 to 279 (PLLSAATPTAAVTSV) the composition is skewed to low complexity.

In terms of assembly, component of the spliceosome, where it is associated with snRNP U1. Binds stem loop I of U1 snRNA. Interacts with mRNA.

The protein resides in the nucleus. Its function is as follows. Involved in nuclear mRNA splicing. This Saccharomyces cerevisiae (strain ATCC 204508 / S288c) (Baker's yeast) protein is U1 small nuclear ribonucleoprotein 70 kDa homolog (SNP1).